Reading from the N-terminus, the 147-residue chain is uncharacterized protein (147 aa).

Positions 1–147 (MEIRRADKDD…RPESGGSGSE (147 aa)) constitute an N-acetyltransferase domain.

It belongs to the acetyltransferase family.

This is an uncharacterized protein from Archaeoglobus fulgidus (strain ATCC 49558 / DSM 4304 / JCM 9628 / NBRC 100126 / VC-16).